We begin with the raw amino-acid sequence, 262 residues long: Tryptophan synthase alpha chain (262 aa).

Active-site proton acceptor residues include Glu48 and Asp59.

Belongs to the TrpA family. In terms of assembly, tetramer of two alpha and two beta chains.

The catalysed reaction is (1S,2R)-1-C-(indol-3-yl)glycerol 3-phosphate + L-serine = D-glyceraldehyde 3-phosphate + L-tryptophan + H2O. Its pathway is amino-acid biosynthesis; L-tryptophan biosynthesis; L-tryptophan from chorismate: step 5/5. Functionally, the alpha subunit is responsible for the aldol cleavage of indoleglycerol phosphate to indole and glyceraldehyde 3-phosphate. This is Tryptophan synthase alpha chain from Helicobacter pylori (strain J99 / ATCC 700824) (Campylobacter pylori J99).